The chain runs to 107 residues: Large ribosomal subunit protein bL21c (107 aa).

Belongs to the bacterial ribosomal protein bL21 family. As to quaternary structure, part of the 50S ribosomal subunit.

It is found in the plastid. The protein resides in the chloroplast. Its function is as follows. This protein binds to 23S rRNA. This is Large ribosomal subunit protein bL21c from Cyanidioschyzon merolae (strain NIES-3377 / 10D) (Unicellular red alga).